The chain runs to 74 residues: Lantibiotic lichenicidin A1 (74 aa).

Residues 1–42 (MSKKEMILSWKNPMYRTESSYHPAGNILKELQEEEQHSIAGG) constitute a propeptide that is removed on maturation. Threonine 43 bears the 2-oxobutanoic acid mark. Positions 45–49 (TLSTC) form a cross-link, beta-methyllanthionine (Thr-Cys). Serine 47 carries the 2,3-didehydroalanine (Ser) modification. Residue threonine 48 is modified to (Z)-2,3-didehydrobutyrine. The segment at residues 53–63 (SKPLGNNGYLC) is a cross-link (lanthionine (Ser-Cys)). Cross-links (beta-methyllanthionine (Thr-Cys)) lie at residues 64–69 (TVTKEC) and 66–73 (TKECMPSC).

Maturation of lantibiotics involves the enzymatic conversion of Thr, and Ser into dehydrated AA and the formation of thioether bonds with cysteine. This is followed by membrane translocation and cleavage of the modified precursor.

It is found in the secreted. The protein resides in the cell wall. Lanthionine-containing peptide antibiotic (lantibiotic) active on Gram-positive bacteria. The bactericidal activity of lantibiotics is based on depolarization of energized bacterial cytoplasmic membranes, initiated by the formation of aqueous transmembrane pores. When present individually, LchA1 exhibits activity towards L.lactis HP. When combined with LchA2, it displays activity towards a broad spectrum of non-pathogenic and pathogenic Gram-positive bacteria including strains of L.monocytogenes, methicillin-resistant S.aureus, S.pneumoniae and strains of vancomycin-resistant enterococci, but not towards E.faecium L4001 and BM4147-1. Combined LchA1 and LchA2 peptides also inhibit Bacillus sp. HIL-Y85/54728, L.lactis DPC3417 and B.halodurans C-125, which produce lantibiotics themselves. Inactivated by proteinase K and pronase E, but not by trypsin and chymotrypsin. The protein is Lantibiotic lichenicidin A1 of Bacillus licheniformis (strain ATCC 14580 / DSM 13 / JCM 2505 / CCUG 7422 / NBRC 12200 / NCIMB 9375 / NCTC 10341 / NRRL NRS-1264 / Gibson 46).